We begin with the raw amino-acid sequence, 418 residues long: Protein-lysine N-trimethyltransferase SMYD5 (418 aa).

Residues 21-352 (VSVEVRFVSS…PGEEICISYL (332 aa)) form the SET domain. Residues 98 to 136 (PELCTVRKDLHQNCPHCQVMYCSAECRLAATEQYHQVLC) form an MYND-type zinc finger. Tyr-351 is a binding site for S-adenosyl-L-methionine. Residues 385–418 (ADEPNVTSEEEEEEEEEEEGEPEDAELGDEMTDV) are disordered.

This sequence belongs to the class V-like SAM-binding methyltransferase superfamily. In terms of assembly, interacts with the N-CoR complex. Interacts with EHMT2 and CBX5. In terms of processing, ubiquitinated and degradaed by the proteasome in response to mild hypothermia (32 degrees Celsius), relieving repression of the SP1 gene.

It localises to the cytoplasm. The catalysed reaction is L-lysyl-[protein] + 3 S-adenosyl-L-methionine = N(6),N(6),N(6)-trimethyl-L-lysyl-[protein] + 3 S-adenosyl-L-homocysteine + 3 H(+). The enzyme catalyses L-lysyl(20)-[histone H4] + 3 S-adenosyl-L-methionine = N(6),N(6),N(6)-trimethyl-L-lysyl(20)-[histone H4] + 3 S-adenosyl-L-homocysteine + 3 H(+). It catalyses the reaction L-lysyl(36)-[histone H3] + 3 S-adenosyl-L-methionine = N(6),N(6),N(6)-trimethyl-L-lysyl(36)-[histone H3] + 3 S-adenosyl-L-homocysteine + 3 H(+). In terms of biological role, protein-lysine N-trimethyltransferase that specifically catalyzes trimethylation of 'Lys-22' of the RPL40/eL40 subunit of the 60S ribosome, thereby promoting translation elongation and protein synthesis. May also act as a histone methyltransferase in the context of histone octamers, but not on nucleosome substrates: trimethylates 'Lys-36' of histone H3 and 'Lys-20' of histone H4 to form H3K36me3 and H4K20me3, respectively. The histone methyltransferase activity, which is independent of its SET domain, is however unsure in vivo. In association with the NCoR corepressor complex, involved in the repression of toll-like receptor 4 (TLR4)-target inflammatory genes in macrophages, possibly by catalyzing the formation of H4K20me3 at the gene promoters. Plays an important role in embryonic stem (ES) cell self-renewal and differentiation. Maintains genome stability of ES cells during differentiation through regulation of heterochromatin formation and repression of endogenous repetitive DNA elements by promoting H4K20me3 marks. Acts as a regulator of the hypothermia response: its degradation in response to mild hypothermia relieves the formation of H3K36me3 at gene promoters, allowing expression of the neuroprotective gene SP1. The chain is Protein-lysine N-trimethyltransferase SMYD5 from Homo sapiens (Human).